The following is a 206-amino-acid chain: MMTRLETLKNNLQATLGQDIALTEALGELTLEVPADQWLTVCNKLRTDAGLRFESCIDLCGMDYQTWGDGSHANAHDEPARPGRFAVVIHLLSIEHNWRLRVRTYAVDEEFPIVASLIECWPGVNWYEREAFDLYGIVFEGHPDLRRILTDYGFIGHPFRKDFPLSGTVEMRYDPEQKRVIYQPVTIDPREITPRIVRESSYGMGR.

Belongs to the complex I 30 kDa subunit family. As to quaternary structure, NDH-1 is composed of 14 different subunits. Subunits NuoB, C, D, E, F, and G constitute the peripheral sector of the complex.

The protein resides in the cell inner membrane. It carries out the reaction a quinone + NADH + 5 H(+)(in) = a quinol + NAD(+) + 4 H(+)(out). Functionally, NDH-1 shuttles electrons from NADH, via FMN and iron-sulfur (Fe-S) centers, to quinones in the respiratory chain. The immediate electron acceptor for the enzyme in this species is believed to be ubiquinone. Couples the redox reaction to proton translocation (for every two electrons transferred, four hydrogen ions are translocated across the cytoplasmic membrane), and thus conserves the redox energy in a proton gradient. This Bordetella avium (strain 197N) protein is NADH-quinone oxidoreductase subunit C.